The following is an 88-amino-acid chain: UPF0335 protein NGR_c28390 (88 aa).

Belongs to the UPF0335 family.

This is UPF0335 protein NGR_c28390 from Sinorhizobium fredii (strain NBRC 101917 / NGR234).